Reading from the N-terminus, the 142-residue chain is Acidic phospholipase A2 KBf-grIB (142 aa).

Intrachain disulfides connect Cys28–Cys94, Cys44–Cys141, Cys46–Cys62, Cys61–Cys122, Cys68–Cys115, Cys78–Cys108, and Cys101–Cys113. Residues Tyr45, Gly47, and Gly49 each coordinate Ca(2+). His65 is a catalytic residue. Position 66 (Asp66) interacts with Ca(2+). Asp116 is an active-site residue.

The protein belongs to the phospholipase A2 family. Group I subfamily. D49 sub-subfamily. Requires Ca(2+) as cofactor. As to expression, expressed by the venom gland.

The protein localises to the secreted. The enzyme catalyses a 1,2-diacyl-sn-glycero-3-phosphocholine + H2O = a 1-acyl-sn-glycero-3-phosphocholine + a fatty acid + H(+). In terms of biological role, PLA2 catalyzes the calcium-dependent hydrolysis of the 2-acyl groups in 3-sn-phosphoglycerides. This is Acidic phospholipase A2 KBf-grIB from Bungarus fasciatus (Banded krait).